Consider the following 75-residue polypeptide: DNA-directed RNA polymerase subunit Rpo6 (75 aa).

The protein belongs to the archaeal Rpo6/eukaryotic RPB6 RNA polymerase subunit family. Part of the RNA polymerase complex.

The protein resides in the cytoplasm. The catalysed reaction is RNA(n) + a ribonucleoside 5'-triphosphate = RNA(n+1) + diphosphate. DNA-dependent RNA polymerase (RNAP) catalyzes the transcription of DNA into RNA using the four ribonucleoside triphosphates as substrates. The polypeptide is DNA-directed RNA polymerase subunit Rpo6 (Archaeoglobus fulgidus (strain ATCC 49558 / DSM 4304 / JCM 9628 / NBRC 100126 / VC-16)).